We begin with the raw amino-acid sequence, 732 residues long: uncharacterized protein (732 aa).

Positions 163–390 constitute a TR mART core domain; that stretch reads YYTINELNYL…FGIVAKKKYE (228 aa). Catalysis depends on residues arginine 285, serine 309, and glutamate 354.

This is an uncharacterized protein from Acanthamoeba polyphaga mimivirus (APMV).